Consider the following 101-residue polypeptide: uncharacterized protein (101 aa).

The protein resides in the mitochondrion. This is an uncharacterized protein from Arabidopsis thaliana (Mouse-ear cress).